The sequence spans 380 residues: Chaperone protein DnaJ (380 aa).

The 65-residue stretch at aspartate 5 to glycine 69 folds into the J domain. Residues glycine 135 to arginine 217 form a CR-type zinc finger. The Zn(2+) site is built by cysteine 148, cysteine 151, cysteine 165, cysteine 168, cysteine 191, cysteine 194, cysteine 205, and cysteine 208. CXXCXGXG motif repeat units follow at residues cysteine 148–glycine 155, cysteine 165–glycine 172, cysteine 191–glycine 198, and cysteine 205–glycine 212.

The protein belongs to the DnaJ family. Homodimer. Requires Zn(2+) as cofactor.

The protein localises to the cytoplasm. In terms of biological role, participates actively in the response to hyperosmotic and heat shock by preventing the aggregation of stress-denatured proteins and by disaggregating proteins, also in an autonomous, DnaK-independent fashion. Unfolded proteins bind initially to DnaJ; upon interaction with the DnaJ-bound protein, DnaK hydrolyzes its bound ATP, resulting in the formation of a stable complex. GrpE releases ADP from DnaK; ATP binding to DnaK triggers the release of the substrate protein, thus completing the reaction cycle. Several rounds of ATP-dependent interactions between DnaJ, DnaK and GrpE are required for fully efficient folding. Also involved, together with DnaK and GrpE, in the DNA replication of plasmids through activation of initiation proteins. The protein is Chaperone protein DnaJ of Geobacillus stearothermophilus (Bacillus stearothermophilus).